A 565-amino-acid chain; its full sequence is NAD-dependent malic enzyme (565 aa).

Tyr104 serves as the catalytic Proton donor. Arg157 lines the NAD(+) pocket. The Proton acceptor role is filled by Lys175. Residues Glu246, Asp247, and Asp270 each coordinate a divalent metal cation. Positions 270 and 418 each coordinate NAD(+).

This sequence belongs to the malic enzymes family. Homotetramer. Mg(2+) is required as a cofactor. Mn(2+) serves as cofactor.

The catalysed reaction is (S)-malate + NAD(+) = pyruvate + CO2 + NADH. It catalyses the reaction oxaloacetate + H(+) = pyruvate + CO2. This Serratia proteamaculans (strain 568) protein is NAD-dependent malic enzyme.